We begin with the raw amino-acid sequence, 389 residues long: tRNA-specific 2-thiouridylase MnmA (389 aa).

Residues 30 to 37 and Leu56 each bind ATP; that span reads GLSGGVDS. The active-site Nucleophile is Cys117. Cys117 and Cys216 form a disulfide bridge. Gly142 is an ATP binding site. Residues 166-168 are interaction with tRNA; that stretch reads KDQ. Cys216 functions as the Cysteine persulfide intermediate in the catalytic mechanism. The tract at residues 321–322 is interaction with tRNA; it reads RY.

The protein belongs to the MnmA/TRMU family.

The protein resides in the cytoplasm. The catalysed reaction is S-sulfanyl-L-cysteinyl-[protein] + uridine(34) in tRNA + AH2 + ATP = 2-thiouridine(34) in tRNA + L-cysteinyl-[protein] + A + AMP + diphosphate + H(+). Its function is as follows. Catalyzes the 2-thiolation of uridine at the wobble position (U34) of tRNA, leading to the formation of s(2)U34. This is tRNA-specific 2-thiouridylase MnmA from Synechococcus sp. (strain CC9902).